The primary structure comprises 265 residues: Translation initiation factor 2 subunit alpha (265 aa).

An S1 motif domain is found at 12 to 83 (GELIIGTVYK…KKGHVDASLK (72 aa)).

Belongs to the eIF-2-alpha family. As to quaternary structure, heterotrimer composed of an alpha, a beta and a gamma chain.

EIF-2 functions in the early steps of protein synthesis by forming a ternary complex with GTP and initiator tRNA. In Methanobrevibacter smithii (strain ATCC 35061 / DSM 861 / OCM 144 / PS), this protein is Translation initiation factor 2 subunit alpha.